The primary structure comprises 264 residues: Small ribosomal subunit protein eS1A (264 aa).

The tract at residues 233–264 (GEGGGTGKPAGDETGAKVERADGYEPPVQESV) is disordered. The segment covering 242-255 (AGDETGAKVERADG) has biased composition (basic and acidic residues).

Belongs to the eukaryotic ribosomal protein eS1 family. In terms of assembly, component of the small ribosomal subunit. Mature ribosomes consist of a small (40S) and a large (60S) subunit. The 40S subunit contains about 33 different proteins and 1 molecule of RNA (18S). The 60S subunit contains about 49 different proteins and 3 molecules of RNA (28S, 5.8S and 5S). Part of the small subunit (SSU) processome, composed of more than 70 proteins and the RNA chaperone small nucleolar RNA (snoRNA) U3.

It localises to the cytoplasm. It is found in the nucleus. The protein localises to the nucleolus. Component of the small ribosomal subunit. The ribosome is a large ribonucleoprotein complex responsible for the synthesis of proteins in the cell. Part of the small subunit (SSU) processome, first precursor of the small eukaryotic ribosomal subunit. During the assembly of the SSU processome in the nucleolus, many ribosome biogenesis factors, an RNA chaperone and ribosomal proteins associate with the nascent pre-rRNA and work in concert to generate RNA folding, modifications, rearrangements and cleavage as well as targeted degradation of pre-ribosomal RNA by the RNA exosome. May play a role during erythropoiesis. The chain is Small ribosomal subunit protein eS1A (rps3a-a) from Xenopus laevis (African clawed frog).